The sequence spans 419 residues: Tyrosine--tRNA ligase (419 aa).

Y34 lines the L-tyrosine pocket. A 'HIGH' region motif is present at residues P39–N48. Residues Y169 and Q173 each contribute to the L-tyrosine site. A 'KMSKS' region motif is present at residues K230–T234. K233 provides a ligand contact to ATP. An S4 RNA-binding domain is found at V352–A419.

This sequence belongs to the class-I aminoacyl-tRNA synthetase family. TyrS type 1 subfamily. In terms of assembly, homodimer.

It localises to the cytoplasm. It catalyses the reaction tRNA(Tyr) + L-tyrosine + ATP = L-tyrosyl-tRNA(Tyr) + AMP + diphosphate + H(+). Functionally, catalyzes the attachment of tyrosine to tRNA(Tyr) in a two-step reaction: tyrosine is first activated by ATP to form Tyr-AMP and then transferred to the acceptor end of tRNA(Tyr). This chain is Tyrosine--tRNA ligase, found in Geobacillus kaustophilus (strain HTA426).